A 224-amino-acid chain; its full sequence is Peroxynitrite isomerase 2 (224 aa).

The GXWXGXG signature appears at 71–77; that stretch reads GVWRGEG. Residues lysine 187 and histidine 214 each coordinate heme b.

This sequence belongs to the nitrobindin family. As to quaternary structure, homodimer. Heme b is required as a cofactor.

It carries out the reaction peroxynitrite = nitrate. The protein operates within nitrogen metabolism. Functionally, heme-binding protein able to scavenge peroxynitrite and to protect free L-tyrosine against peroxynitrite-mediated nitration, by acting as a peroxynitrite isomerase that converts peroxynitrite to nitrate. Therefore, this protein likely plays a role in peroxynitrite sensing and in the detoxification of reactive nitrogen and oxygen species (RNS and ROS, respectively). Is able to bind nitric oxide (NO) in vitro, but may act as a sensor of peroxynitrite levels in vivo. This Mycobacterium sp. (strain JLS) protein is Peroxynitrite isomerase 2.